Here is a 69-residue protein sequence, read N- to C-terminus: uncharacterized protein (69 aa).

The next 2 membrane-spanning stretches (helical) occupy residues 15–35 (LIIGLLCVIGIVMLNGLICYV) and 36–56 (LYIIAVPSLLYGIGAFIIPKT).

The protein resides in the cell membrane. This is an uncharacterized protein from Methanocaldococcus jannaschii (strain ATCC 43067 / DSM 2661 / JAL-1 / JCM 10045 / NBRC 100440) (Methanococcus jannaschii).